A 336-amino-acid chain; its full sequence is MIQKNWQELIKPSKIEFTSKGRTQTNLVAEPLERGFGLTLGNALRRVLLSSLRGAAVTAVQIDGVLHEFSSIAGVREDVTDIVLNIKEIAIRMEGDGPKRMVLRKQGPGAVTAGDIQTVGDVEILNPEHVICTLDQGAEIRMEFTVNTGKGYVPADRNRAEDAPIGLIPVDSLYSPVKKVSYKVENTREGQVLDYDKLTMTIETDGSVTGEDAVAFAARILQDQLGLFVNFEEPQKEVPAEQVTELAFNPALLKKVDELELSVRSANCLKNDNIVYIGDLIQKTEAEMLRTPNFGRKSLNEIKEVLASMGLHLGMEVPDWPPDNIEELAKRYEDQY.

The interval 1-232 (MIQKNWQELI…DQLGLFVNFE (232 aa)) is alpha N-terminal domain (alpha-NTD). The interval 248 to 336 (FNPALLKKVD…ELAKRYEDQY (89 aa)) is alpha C-terminal domain (alpha-CTD).

The protein belongs to the RNA polymerase alpha chain family. As to quaternary structure, homodimer. The RNAP catalytic core consists of 2 alpha, 1 beta, 1 beta' and 1 omega subunit. When a sigma factor is associated with the core the holoenzyme is formed, which can initiate transcription.

It catalyses the reaction RNA(n) + a ribonucleoside 5'-triphosphate = RNA(n+1) + diphosphate. In terms of biological role, DNA-dependent RNA polymerase catalyzes the transcription of DNA into RNA using the four ribonucleoside triphosphates as substrates. This is DNA-directed RNA polymerase subunit alpha from Chelativorans sp. (strain BNC1).